A 388-amino-acid chain; its full sequence is Glucose-1-phosphate adenylyltransferase (388 aa).

Alpha-D-glucose 1-phosphate-binding positions include Y100, G165, E180 to K181, and S191.

This sequence belongs to the bacterial/plant glucose-1-phosphate adenylyltransferase family. Homotetramer.

It catalyses the reaction alpha-D-glucose 1-phosphate + ATP + H(+) = ADP-alpha-D-glucose + diphosphate. Its pathway is glycan biosynthesis; glycogen biosynthesis. Involved in the biosynthesis of ADP-glucose, a building block required for the elongation reactions to produce glycogen. Catalyzes the reaction between ATP and alpha-D-glucose 1-phosphate (G1P) to produce pyrophosphate and ADP-Glc. This chain is Glucose-1-phosphate adenylyltransferase, found in Clostridium perfringens (strain SM101 / Type A).